The primary structure comprises 508 residues: Lysine--tRNA ligase (508 aa).

Mg(2+) is bound by residues Glu-418 and Glu-425.

Belongs to the class-II aminoacyl-tRNA synthetase family. In terms of assembly, homodimer. It depends on Mg(2+) as a cofactor.

The protein resides in the cytoplasm. The enzyme catalyses tRNA(Lys) + L-lysine + ATP = L-lysyl-tRNA(Lys) + AMP + diphosphate. This Burkholderia mallei (strain NCTC 10247) protein is Lysine--tRNA ligase.